A 631-amino-acid chain; its full sequence is MSRQHAAYIDYALNRMKKMPIEMLGSDTITLKPYQHFVAKVFLGLDTMHSILLFHDTGVGKTITTVFILKHLKDIYTNWTILLLVKKALVEDPWMNTILKYSPEIIKNCIFINYDDKNFHNKFFTNIKTISSRSRVCVVLDECHNFISKSLIKEDGKQRPTKSVYNYLSKNISLNNNKMICLSATPIVNNVREFTMIVNLLRPKIIQFQSLFENKNLVNEKELIDKLGGICSYIVNDEFSIFDDVEGSQSFAKKTVYMHYVNMTKQQEIIYQKAKIAEIKSGIASFRIYRRMAATFSFDSFPDKKKKTIDEITLELGALYKDFVNYVNKKSFSNNAIKLFKSGKGLTGDSNPLDISLLSELRQKSCKFTEVCLKILASPGKCLVFEPFINQSGIEVLLVYFSVFCITSVEFSSRTKDTRIKNVFEFNKESNTNGEQIKVCVFSISGGEGISFFSINDIFILDMTWNEASLKQIVGRAIRLNSHANTPPNRRYVNVYFIIARLSSGEPTVDEDLINIIKTKSKEFFQLFKVFKESSIEWIYKNKKDFYPINDESGWRALTSRVVDVNVKSKRTVQLAQGQNIWFSNSSRMVTIHKGFKTSDGKIFDVDGNFIQNMPINPIIKIHNDKLVYII.

The 163-residue stretch at 42 to 204 (FLGLDTMHSI…TMIVNLLRPK (163 aa)) folds into the Helicase ATP-binding domain. 55–62 (HDTGVGKT) lines the ATP pocket. The short motif at 141-144 (DECH) is the DEXH box element. Residues 367-536 (KFTEVCLKIL…LFKVFKESSI (170 aa)) enclose the Helicase C-terminal domain. Positions 457–524 (DIFILDMTWN…NIIKTKSKEF (68 aa)) are binding to the cap-specific mRNA (nucleoside-2'-O-)-methyltransferase.

It belongs to the helicase family. NPH I subfamily. Monomer. Interacts (via C-terminus) with RAP94 (via N-terminus). Interacts with the cap-specific mRNA (nucleoside-2'-O-)-methyltransferase.

The protein localises to the virion. The enzyme catalyses a ribonucleoside 5'-triphosphate + H2O = a ribonucleoside 5'-diphosphate + phosphate + H(+). Functionally, DNA-dependent ATPase required for providing the needed energy to achieve the termination of early transcripts. Acts in concert with the RAP94 subunit of the virion RNA polymerase and the capping enzyme/VTF to catalyze release of UUUUUNU-containing nascent RNA from the elongation complex. NPH-I must bind ssDNA in order to exhibit ATPase activity. This is Nucleoside triphosphatase I (NPH1) from Erythrocebus patas (Red guenon).